A 160-amino-acid polypeptide reads, in one-letter code: Transcription elongation factor GreA (160 aa).

A coiled-coil region spans residues 53–73 (AREEQGMVEARIRDIEGRLQN).

Belongs to the GreA/GreB family.

Functionally, necessary for efficient RNA polymerase transcription elongation past template-encoded arresting sites. The arresting sites in DNA have the property of trapping a certain fraction of elongating RNA polymerases that pass through, resulting in locked ternary complexes. Cleavage of the nascent transcript by cleavage factors such as GreA or GreB allows the resumption of elongation from the new 3'terminus. GreA releases sequences of 2 to 3 nucleotides. The chain is Transcription elongation factor GreA from Pseudomonas putida (strain ATCC 47054 / DSM 6125 / CFBP 8728 / NCIMB 11950 / KT2440).